We begin with the raw amino-acid sequence, 764 residues long: 5-methyltetrahydropteroyltriglutamate--homocysteine methyltransferase (764 aa).

Residues 16 to 19 and lysine 117 contribute to the 5-methyltetrahydropteroyltri-L-glutamate site; that span reads RELK. Residues 442–444 and glutamate 495 each bind L-homocysteine; that span reads IGS. L-methionine-binding positions include 442 to 444 and glutamate 495; that span reads IGS. 5-methyltetrahydropteroyltri-L-glutamate contacts are provided by residues 526–527 and tryptophan 572; that span reads RC. Aspartate 610 lines the L-homocysteine pocket. L-methionine is bound at residue aspartate 610. Glutamate 616 lines the 5-methyltetrahydropteroyltri-L-glutamate pocket. Residues histidine 652, cysteine 654, and glutamate 676 each coordinate Zn(2+). The Proton donor role is filled by histidine 705. A Zn(2+)-binding site is contributed by cysteine 737.

The protein belongs to the vitamin-B12 independent methionine synthase family. Requires Zn(2+) as cofactor.

It catalyses the reaction 5-methyltetrahydropteroyltri-L-glutamate + L-homocysteine = tetrahydropteroyltri-L-glutamate + L-methionine. The protein operates within amino-acid biosynthesis; L-methionine biosynthesis via de novo pathway; L-methionine from L-homocysteine (MetE route): step 1/1. Functionally, catalyzes the transfer of a methyl group from 5-methyltetrahydrofolate to homocysteine resulting in methionine formation. The polypeptide is 5-methyltetrahydropteroyltriglutamate--homocysteine methyltransferase (Bordetella bronchiseptica (strain ATCC BAA-588 / NCTC 13252 / RB50) (Alcaligenes bronchisepticus)).